The sequence spans 294 residues: Large ribosomal subunit protein uL4m (294 aa).

The segment at 119 to 139 (EVSGGGRKPWQQKGSGRARHG) is disordered. R147 bears the Omega-N-methylarginine mark.

The protein belongs to the universal ribosomal protein uL4 family. Component of the mitochondrial ribosome large subunit (39S) which comprises a 16S rRNA and about 50 distinct proteins. Interacts with MIEF1 upstream open reading frame protein.

It is found in the mitochondrion. The protein is Large ribosomal subunit protein uL4m (Mrpl4) of Mus musculus (Mouse).